A 316-amino-acid chain; its full sequence is L-lactate dehydrogenase 3 (316 aa).

NAD(+) contacts are provided by valine 16, aspartate 37, arginine 42, and tyrosine 68. Position 91 (arginine 91) interacts with substrate. Residues serine 104, 121–123 (ASN), and threonine 146 contribute to the NAD(+) site. 123-126 (NPVD) contributes to the substrate binding site. Substrate is bound at residue 151 to 154 (DSSR). Arginine 156 and histidine 171 together coordinate beta-D-fructose 1,6-bisphosphate. The active-site Proton acceptor is histidine 178. Threonine 233 contributes to the substrate binding site.

It belongs to the LDH/MDH superfamily. LDH family. As to quaternary structure, homotetramer.

It is found in the cytoplasm. The enzyme catalyses (S)-lactate + NAD(+) = pyruvate + NADH + H(+). It functions in the pathway fermentation; pyruvate fermentation to lactate; (S)-lactate from pyruvate: step 1/1. Its activity is regulated as follows. Allosterically activated by fructose 1,6-bisphosphate (FBP). Its function is as follows. Catalyzes the conversion of lactate to pyruvate. The chain is L-lactate dehydrogenase 3 from Bacillus cereus (strain ATCC 14579 / DSM 31 / CCUG 7414 / JCM 2152 / NBRC 15305 / NCIMB 9373 / NCTC 2599 / NRRL B-3711).